A 323-amino-acid chain; its full sequence is Fructose-1,6-bisphosphatase class 1 (323 aa).

Mg(2+) is bound by residues Glu84, Asp103, Leu105, and Asp106. Substrate-binding positions include 106–109 (DGSS), Asn198, and Lys264. Glu270 provides a ligand contact to Mg(2+).

It belongs to the FBPase class 1 family. Homotetramer. Mg(2+) is required as a cofactor.

It is found in the cytoplasm. It carries out the reaction beta-D-fructose 1,6-bisphosphate + H2O = beta-D-fructose 6-phosphate + phosphate. Its pathway is carbohydrate biosynthesis; gluconeogenesis. The chain is Fructose-1,6-bisphosphatase class 1 from Cellvibrio japonicus (strain Ueda107) (Pseudomonas fluorescens subsp. cellulosa).